The sequence spans 514 residues: Nuclear hormone receptor family member nhr-85 (514 aa).

The disordered stretch occupies residues 28–48; the sequence is TSFSSPPATSSSSLLSPSPSS. A DNA-binding region (nuclear receptor) is located at residues 110 to 186; the sequence is TILCQVCSDK…VGMSRDAVRF (77 aa). NR C4-type zinc fingers lie at residues 113–133 and 150–174; these read CQVC…CEGC and CTRA…LKKC. An NR LBD domain is found at 216–514; that stretch reads QYENLTEVMH…VSPVPTTLSE (299 aa). The interval 465-514 is disordered; sequence ERPRRISSSGAQEPLNLSLPHVRHQVKRDVDSDEQLEEMKVSPVPTTLSE.

The protein belongs to the nuclear hormone receptor family.

The protein localises to the nucleus. Its function is as follows. Orphan nuclear receptor. In Caenorhabditis elegans, this protein is Nuclear hormone receptor family member nhr-85 (nhr-85).